The following is a 406-amino-acid chain: MAATPHRHLLQPCKNPAISSSETLKPSSSFSLSSNPSIPLIRRRLPTFRCDFQNRRKWMNVDHHISKLNPIQIVPNSRRFQMSSNQENSVEFSKKVCLFYCPETKALAERIAAQSDAIQLRSISWRTFEDGFPNLFISNAQGIRGKHVAFLASFSSPGVIFEQLSVIYALPKLFVASFKLVLPFFPTGTSERMEDEGDVATAFTLARILSNIPISREGPTSLVTFDIHALQERFYFGDNILPCFESGIPLLKKKLQQLPDSDNITIAFPDDGAWKRFHKQLQHFPMIVCAKVREGDQRIVRLKEGDPTGRHVVIVDDLVQSGGTLIECQKVLAAHGAAKVSAYVTHGIFPNKSWERFKPDTAGCPEEGMTHFWITDSCPLTVKMVKNRPPFEVISLAGSIAAALQI.

The tract at residues 1-32 is disordered; it reads MAATPHRHLLQPCKNPAISSSETLKPSSSFSL. Residues 1–87 constitute a mitochondrion transit peptide; the sequence is MAATPHRHLL…RRFQMSSNQE (87 aa). Residues 18 to 32 show a composition bias toward low complexity; the sequence is ISSSETLKPSSSFSL. Mg(2+) contacts are provided by Asp-226 and His-228. Residues 309–324 form a binding of phosphoribosylpyrophosphate region; the sequence is GRHVVIVDDLVQSGGT.

This sequence belongs to the ribose-phosphate pyrophosphokinase family.

It is found in the mitochondrion. It carries out the reaction D-ribose 5-phosphate + ATP = 5-phospho-alpha-D-ribose 1-diphosphate + AMP + H(+). This chain is Ribose-phosphate pyrophosphokinase 3, mitochondrial (PRS3), found in Spinacia oleracea (Spinach).